Reading from the N-terminus, the 287-residue chain is Glutamate racemase (287 aa).

Residues 32–33 (DS) and 64–65 (YG) each bind substrate. Catalysis depends on cysteine 96, which acts as the Proton donor/acceptor. 97 to 98 (NT) serves as a coordination point for substrate. Cysteine 208 (proton donor/acceptor) is an active-site residue. Residue 209–210 (TH) participates in substrate binding.

Belongs to the aspartate/glutamate racemases family.

It catalyses the reaction L-glutamate = D-glutamate. It functions in the pathway cell wall biogenesis; peptidoglycan biosynthesis. Provides the (R)-glutamate required for cell wall biosynthesis. The protein is Glutamate racemase of Photorhabdus laumondii subsp. laumondii (strain DSM 15139 / CIP 105565 / TT01) (Photorhabdus luminescens subsp. laumondii).